The following is a 259-amino-acid chain: Deoxyribose-phosphate aldolase (259 aa).

The active-site Proton donor/acceptor is the Asp-102. Lys-167 (schiff-base intermediate with acetaldehyde) is an active-site residue. Lys-201 serves as the catalytic Proton donor/acceptor.

Belongs to the DeoC/FbaB aldolase family. DeoC type 2 subfamily.

It localises to the cytoplasm. It catalyses the reaction 2-deoxy-D-ribose 5-phosphate = D-glyceraldehyde 3-phosphate + acetaldehyde. Its pathway is carbohydrate degradation; 2-deoxy-D-ribose 1-phosphate degradation; D-glyceraldehyde 3-phosphate and acetaldehyde from 2-deoxy-alpha-D-ribose 1-phosphate: step 2/2. Its function is as follows. Catalyzes a reversible aldol reaction between acetaldehyde and D-glyceraldehyde 3-phosphate to generate 2-deoxy-D-ribose 5-phosphate. In Salmonella typhi, this protein is Deoxyribose-phosphate aldolase.